A 784-amino-acid chain; its full sequence is LPS-assembly protein LptD (784 aa).

A signal peptide spans 1-24; that stretch reads MKKRIPTLLATMIASALYSHQGLA. 2 disulfide bridges follow: Cys-31–Cys-724 and Cys-173–Cys-725.

It belongs to the LptD family. As to quaternary structure, component of the lipopolysaccharide transport and assembly complex. Interacts with LptE and LptA. In terms of processing, contains two intramolecular disulfide bonds.

Its subcellular location is the cell outer membrane. Together with LptE, is involved in the assembly of lipopolysaccharide (LPS) at the surface of the outer membrane. This is LPS-assembly protein LptD from Salmonella typhi.